The chain runs to 345 residues: Heat stress transcription factor A-2 (345 aa).

Residues 17–30 (GSVAASSSVGSSSS) are compositionally biased toward low complexity. Residues 17 to 40 (GSVAASSSVGSSSSPRPMEGLNET) form a disordered region. A DNA-binding region spans residues 42-136 (PPPFLTKTYE…LLKNIKRRRN (95 aa)). Residues 150–216 (SCVEVGQYGF…QMMTFLAKAL (67 aa)) are hydrophobic repeat HR-A/B. Residues 231-238 (EKKSLFGL) carry the Nuclear localization signal motif. An AHA1 motif is present at residues 273 to 282 (EMLFAAAIDD). Lysine 315 is covalently cross-linked (Glycyl lysine isopeptide (Lys-Gly) (interchain with G-Cter in SUMO)). The AHA2 motif lies at 324–333 (LDWDSQDLHD). The Nuclear export signal motif lies at 334–341 (MVDQMGFL).

Belongs to the HSF family. Class A subfamily. In terms of assembly, homotrimer. Interacts with SUMO1. Binds to HSBP. Exhibits temperature-dependent phosphorylation. Post-translationally, sumoylated at Lys-315. Sumoylation represses its function.

The protein resides in the cytoplasm. The protein localises to the nucleus. Transcriptional activator that specifically binds DNA sequence 5'-AGAAnnTTCT-3' known as heat shock promoter elements (HSE). Seems to be involved in other environmental stress responses. Activates ascorbate peroxidase 2 (APX2) in addition to several heat shock protein (HSPs). Binds to the promoter of SGIP1 and activates its expression in heat acclimated plants. Involved in the mechanisms necessary for quick response to heat and subsequent heritable transgenerational memory of heat acclimation (global warming) such as early flowering and attenuated immunity; this process includes epigenetic regulation as well as post-transcriptional gene silencing (PTGS). In response to heat, HSFA2 is activated and promotes the expression of REF6 which in turn derepresses HSFA2, thus establishing an inheritable feedback loop able to trigger SGIP1 and subsequent SGIP1-mediated SGS3 degradation; this prevents the biosynthesis of trans-acting siRNA (tasiRNA) and leads to the release of HTT5, which drives early flowering but attenuates immunity. The sequence is that of Heat stress transcription factor A-2 from Arabidopsis thaliana (Mouse-ear cress).